We begin with the raw amino-acid sequence, 161 residues long: 3-isopropylmalate dehydratase small subunit (161 aa).

Belongs to the LeuD family. LeuD type 2 subfamily. Heterodimer of LeuC and LeuD.

The catalysed reaction is (2R,3S)-3-isopropylmalate = (2S)-2-isopropylmalate. Its pathway is amino-acid biosynthesis; L-leucine biosynthesis; L-leucine from 3-methyl-2-oxobutanoate: step 2/4. Functionally, catalyzes the isomerization between 2-isopropylmalate and 3-isopropylmalate, via the formation of 2-isopropylmaleate. This chain is 3-isopropylmalate dehydratase small subunit, found in Pyrobaculum calidifontis (strain DSM 21063 / JCM 11548 / VA1).